The chain runs to 200 residues: ATP-dependent Clp protease proteolytic subunit 2 (200 aa).

Ser100 acts as the Nucleophile in catalysis.

This sequence belongs to the peptidase S14 family. As to quaternary structure, fourteen ClpP subunits assemble into 2 heptameric rings which stack back to back to give a disk-like structure with a central cavity, resembling the structure of eukaryotic proteasomes.

Its subcellular location is the cytoplasm. The catalysed reaction is Hydrolysis of proteins to small peptides in the presence of ATP and magnesium. alpha-casein is the usual test substrate. In the absence of ATP, only oligopeptides shorter than five residues are hydrolyzed (such as succinyl-Leu-Tyr-|-NHMec, and Leu-Tyr-Leu-|-Tyr-Trp, in which cleavage of the -Tyr-|-Leu- and -Tyr-|-Trp bonds also occurs).. In terms of biological role, cleaves peptides in various proteins in a process that requires ATP hydrolysis. Has a chymotrypsin-like activity. Plays a major role in the degradation of misfolded proteins. The polypeptide is ATP-dependent Clp protease proteolytic subunit 2 (Streptomyces avermitilis (strain ATCC 31267 / DSM 46492 / JCM 5070 / NBRC 14893 / NCIMB 12804 / NRRL 8165 / MA-4680)).